Here is a 280-residue protein sequence, read N- to C-terminus: MKLLLVLLTIASVALAAVDDVAVNNFKVGILAKDQQPSDENLKTVALFSKLPNELKADASQRLYVSFTVAKKSDNAKVKPHQVFLRFVAQNGEDVVVVVNPDANGNYVYDNVLRTAAKSFRNLSGQFKISLLVGDVTIKNPINWQFANIDAALPVAYEPTPKSQQVHFEPLNEISHIFRQPEKRPSALISDLFTIICLSPLLILVVLWSQVGINFQNAPASPWVPIFHVGLIGIFGIYFMFWVQFDMFVTLKYLAVLGFLTFVAGNRVLRAISESKQKSE.

Positions 1–16 (MKLLLVLLTIASVALA) are cleaved as a signal peptide. The Lumenal segment spans residues 17 to 187 (AVDDVAVNNF…FRQPEKRPSA (171 aa)). A helical membrane pass occupies residues 188–208 (LISDLFTIICLSPLLILVVLW). Residues 209–222 (SQVGINFQNAPASP) are Cytoplasmic-facing. Residues 223–243 (WVPIFHVGLIGIFGIYFMFWV) form a helical membrane-spanning segment. Residue glutamine 244 is a topological domain, lumenal. A helical membrane pass occupies residues 245-265 (FDMFVTLKYLAVLGFLTFVAG). The Cytoplasmic portion of the chain corresponds to 266-280 (NRVLRAISESKQKSE).

This sequence belongs to the SWP1 family. As to quaternary structure, component of the oligosaccharyltransferase (OST) complex.

Its subcellular location is the endoplasmic reticulum membrane. The protein operates within protein modification; protein glycosylation. In terms of biological role, subunit of the oligosaccharyl transferase (OST) complex that catalyzes the initial transfer of a defined glycan (Glc(3)Man(9)GlcNAc(2) in eukaryotes) from the lipid carrier dolichol-pyrophosphate to an asparagine residue within an Asn-X-Ser/Thr consensus motif in nascent polypeptide chains, the first step in protein N-glycosylation. N-glycosylation occurs cotranslationally and the complex associates with the Sec61 complex at the channel-forming translocon complex that mediates protein translocation across the endoplasmic reticulum (ER). All subunits are required for a maximal enzyme activity. The protein is Dolichyl-diphosphooligosaccharide--protein glycosyltransferase subunit 2 of Caenorhabditis elegans.